Reading from the N-terminus, the 273-residue chain is MAGYISDDTRKVTTHRLIEMKQRGEKISMLTSYDYTMAQIVDGAGIDVILVGDSASNVMAGNVTTLPITLDQMIYHGKSVVRGVKRAMVVVDMPFGSYQGNEMEGLASAIRIMKESHADALKLEGGEEIIDTVKRILSAGIPVMGHLGLMPQSINKYGTYTVRAKDDAEAEKLIRDAHLLEEAGCFGLVLEKIPAALASRVASELTIPVIGIGAGGDVDGQVLVIQDMLGMNNGFRPRFLRRYADLYTVMTDAISHYVSDVKNCDFPNEKEQY.

Mg(2+) contacts are provided by D53 and D92. Residues 53–54, D92, and K122 each bind 3-methyl-2-oxobutanoate; that span reads DS. Mg(2+) is bound at residue E124. E191 acts as the Proton acceptor in catalysis.

The protein belongs to the PanB family. As to quaternary structure, homodecamer; pentamer of dimers. Mg(2+) is required as a cofactor.

It is found in the cytoplasm. It catalyses the reaction 3-methyl-2-oxobutanoate + (6R)-5,10-methylene-5,6,7,8-tetrahydrofolate + H2O = 2-dehydropantoate + (6S)-5,6,7,8-tetrahydrofolate. It functions in the pathway cofactor biosynthesis; (R)-pantothenate biosynthesis; (R)-pantoate from 3-methyl-2-oxobutanoate: step 1/2. Functionally, catalyzes the reversible reaction in which hydroxymethyl group from 5,10-methylenetetrahydrofolate is transferred onto alpha-ketoisovalerate to form ketopantoate. This chain is 3-methyl-2-oxobutanoate hydroxymethyltransferase, found in Bacteroides fragilis (strain ATCC 25285 / DSM 2151 / CCUG 4856 / JCM 11019 / LMG 10263 / NCTC 9343 / Onslow / VPI 2553 / EN-2).